Here is a 113-residue protein sequence, read N- to C-terminus: Nucleoid-associated protein EUBREC_0329 (113 aa).

A compositionally biased stretch (gly residues) spans 1-12; it reads MARRGGFPGGMP. The interval 1 to 45 is disordered; the sequence is MARRGGFPGGMPGNMNNLMKQAQKMQRQMEEAQKQLEDAEVTAKA. The segment covering 27-37 has biased composition (basic and acidic residues); that stretch reads RQMEEAQKQLE.

It belongs to the YbaB/EbfC family. In terms of assembly, homodimer.

The protein resides in the cytoplasm. The protein localises to the nucleoid. Its function is as follows. Binds to DNA and alters its conformation. May be involved in regulation of gene expression, nucleoid organization and DNA protection. The protein is Nucleoid-associated protein EUBREC_0329 of Agathobacter rectalis (strain ATCC 33656 / DSM 3377 / JCM 17463 / KCTC 5835 / VPI 0990) (Eubacterium rectale).